A 33-amino-acid chain; its full sequence is Photosystem II reaction center protein T (33 aa).

The helical transmembrane segment at 3-23 threads the bilayer; that stretch reads ALVYTFLLVSTLGIIFFAIFF.

Belongs to the PsbT family. In terms of assembly, PSII is composed of 1 copy each of membrane proteins PsbA, PsbB, PsbC, PsbD, PsbE, PsbF, PsbH, PsbI, PsbJ, PsbK, PsbL, PsbM, PsbT, PsbY, PsbZ, Psb30/Ycf12, at least 3 peripheral proteins of the oxygen-evolving complex and a large number of cofactors. It forms dimeric complexes.

It is found in the plastid. The protein resides in the chloroplast thylakoid membrane. Functionally, found at the monomer-monomer interface of the photosystem II (PS II) dimer, plays a role in assembly and dimerization of PSII. PSII is a light-driven water plastoquinone oxidoreductase, using light energy to abstract electrons from H(2)O, generating a proton gradient subsequently used for ATP formation. This chain is Photosystem II reaction center protein T, found in Helianthus annuus (Common sunflower).